Consider the following 330-residue polypeptide: Probable deoxyhypusine synthase (330 aa).

K303 acts as the Nucleophile in catalysis.

This sequence belongs to the deoxyhypusine synthase family. NAD(+) is required as a cofactor.

It catalyses the reaction [eIF5A protein]-L-lysine + spermidine = [eIF5A protein]-deoxyhypusine + propane-1,3-diamine. The protein operates within protein modification; eIF5A hypusination. Catalyzes the NAD-dependent oxidative cleavage of spermidine and the subsequent transfer of the butylamine moiety of spermidine to the epsilon-amino group of a specific lysine residue of the eIF-5A precursor protein to form the intermediate deoxyhypusine residue. This Methanocaldococcus jannaschii (strain ATCC 43067 / DSM 2661 / JAL-1 / JCM 10045 / NBRC 100440) (Methanococcus jannaschii) protein is Probable deoxyhypusine synthase (dys).